Consider the following 549-residue polypeptide: Chaperonin GroEL 2 (549 aa).

ATP is bound by residues 30–33 (TLGP), Lys-51, 87–91 (DGTTT), Gly-415, 479–481 (NAA), and Asp-495.

It belongs to the chaperonin (HSP60) family. In terms of assembly, forms a cylinder of 14 subunits composed of two heptameric rings stacked back-to-back. Interacts with the co-chaperonin GroES.

The protein resides in the cytoplasm. It catalyses the reaction ATP + H2O + a folded polypeptide = ADP + phosphate + an unfolded polypeptide.. In terms of biological role, together with its co-chaperonin GroES, plays an essential role in assisting protein folding. The GroEL-GroES system forms a nano-cage that allows encapsulation of the non-native substrate proteins and provides a physical environment optimized to promote and accelerate protein folding. This is Chaperonin GroEL 2 from Polaromonas naphthalenivorans (strain CJ2).